The following is a 158-amino-acid chain: Endoribonuclease YbeY (158 aa).

Residues histidine 117, histidine 121, and histidine 127 each contribute to the Zn(2+) site.

Belongs to the endoribonuclease YbeY family. It depends on Zn(2+) as a cofactor.

Its subcellular location is the cytoplasm. Functionally, single strand-specific metallo-endoribonuclease involved in late-stage 70S ribosome quality control and in maturation of the 3' terminus of the 16S rRNA. This Francisella philomiragia subsp. philomiragia (strain ATCC 25017 / CCUG 19701 / FSC 153 / O#319-036) protein is Endoribonuclease YbeY.